A 929-amino-acid chain; its full sequence is Formin-like protein 11 (929 aa).

The first 28 residues, 1-28, serve as a signal peptide directing secretion; sequence MMRHCRREWLLALCLISVQLLIPTGCEG. Positions 153–215 are disordered; that stretch reads ESSTTKSIPE…KSVAEKKKDS (63 aa). Polar residues predominate over residues 171 to 189; the sequence is KTSTPKPVNKPTDSVSSPP. Over residues 191-215 the composition is skewed to basic and acidic residues; it reads RSYKSAPTEKENPPTKSVAEKKKDS. Residues 222–242 form a helical membrane-spanning segment; that stretch reads FIGLSIAGIALMAHLCLCCFM. Disordered stretches follow at residues 372-472 and 726-749; these read PVGS…ENSN and AAKEQNSGVSSVKTDDLGDKSEQT. Over residues 382-447 the composition is skewed to pro residues; that stretch reads MQPPVMPPPI…GPPRPPPPAM (66 aa). In terms of domain architecture, FH2 spans 468–898; that stretch reads VENSNEAKTK…KAKAKQPSQS (431 aa). Positions 738–749 are enriched in basic and acidic residues; it reads KTDDLGDKSEQT.

Belongs to the formin-like family. Class-I subfamily.

The protein resides in the membrane. The polypeptide is Formin-like protein 11 (FH11) (Oryza sativa subsp. japonica (Rice)).